Here is a 137-residue protein sequence, read N- to C-terminus: MKVPVFQLSCLLCLIVCLLCSVKAQKDDQYDTEKSRILEIYNNPAVDEFTKERNIPKLIEFYRRYPARIQLPDADKRQWDEFVARYTESQTKLVDGLPAQGGWVGSVLSSTVGNLIAKFIFSLIRYDPTTPKPTGAH.

The N-terminal stretch at 1–24 (MKVPVFQLSCLLCLIVCLLCSVKA) is a signal peptide.

Belongs to the Turandot family.

The protein localises to the secreted. Functionally, a humoral factor that may play a role in stress tolerance. This chain is Protein Turandot X, found in Drosophila persimilis (Fruit fly).